A 456-amino-acid polypeptide reads, in one-letter code: 3-isopropylmalate dehydratase large subunit (456 aa).

[4Fe-4S] cluster contacts are provided by cysteine 336, cysteine 396, and cysteine 399.

Belongs to the aconitase/IPM isomerase family. LeuC type 1 subfamily. In terms of assembly, heterodimer of LeuC and LeuD. [4Fe-4S] cluster is required as a cofactor.

The catalysed reaction is (2R,3S)-3-isopropylmalate = (2S)-2-isopropylmalate. The protein operates within amino-acid biosynthesis; L-leucine biosynthesis; L-leucine from 3-methyl-2-oxobutanoate: step 2/4. In terms of biological role, catalyzes the isomerization between 2-isopropylmalate and 3-isopropylmalate, via the formation of 2-isopropylmaleate. In Staphylococcus aureus (strain JH1), this protein is 3-isopropylmalate dehydratase large subunit.